Here is a 95-residue protein sequence, read N- to C-terminus: Aspartyl/glutamyl-tRNA(Asn/Gln) amidotransferase subunit C (95 aa).

It belongs to the GatC family. Heterotrimer of A, B and C subunits.

The catalysed reaction is L-glutamyl-tRNA(Gln) + L-glutamine + ATP + H2O = L-glutaminyl-tRNA(Gln) + L-glutamate + ADP + phosphate + H(+). It catalyses the reaction L-aspartyl-tRNA(Asn) + L-glutamine + ATP + H2O = L-asparaginyl-tRNA(Asn) + L-glutamate + ADP + phosphate + 2 H(+). Functionally, allows the formation of correctly charged Asn-tRNA(Asn) or Gln-tRNA(Gln) through the transamidation of misacylated Asp-tRNA(Asn) or Glu-tRNA(Gln) in organisms which lack either or both of asparaginyl-tRNA or glutaminyl-tRNA synthetases. The reaction takes place in the presence of glutamine and ATP through an activated phospho-Asp-tRNA(Asn) or phospho-Glu-tRNA(Gln). This Cytophaga hutchinsonii (strain ATCC 33406 / DSM 1761 / CIP 103989 / NBRC 15051 / NCIMB 9469 / D465) protein is Aspartyl/glutamyl-tRNA(Asn/Gln) amidotransferase subunit C.